A 520-amino-acid chain; its full sequence is NAD(P)H-quinone oxidoreductase subunit 2 (520 aa).

Transmembrane regions (helical) follow at residues 15–35 (ILPE…DLIL), 42–62 (WIGY…YFQW), 79–99 (LSII…LMSI), 106–126 (GTAL…GMFV), 132–152 (LVMI…LTGY), 167–187 (LLIG…LYGL), 210–230 (LGAV…ISAA), 244–264 (PTPV…ALAI), 280–300 (FVFT…ALAQ), 306–326 (MLAY…IAGT), 334–354 (IFYL…IILF), 378–398 (LGLS…GFFG), 400–420 (IYLF…LGLV), and 466–486 (VGLV…NPLF).

This sequence belongs to the complex I subunit 2 family. NDH-1 can be composed of about 15 different subunits; different subcomplexes with different compositions have been identified which probably have different functions.

It is found in the cellular thylakoid membrane. The catalysed reaction is a plastoquinone + NADH + (n+1) H(+)(in) = a plastoquinol + NAD(+) + n H(+)(out). It carries out the reaction a plastoquinone + NADPH + (n+1) H(+)(in) = a plastoquinol + NADP(+) + n H(+)(out). Its function is as follows. NDH-1 shuttles electrons from an unknown electron donor, via FMN and iron-sulfur (Fe-S) centers, to quinones in the respiratory and/or the photosynthetic chain. The immediate electron acceptor for the enzyme in this species is believed to be plastoquinone. Couples the redox reaction to proton translocation, and thus conserves the redox energy in a proton gradient. Cyanobacterial NDH-1 also plays a role in inorganic carbon-concentration. The polypeptide is NAD(P)H-quinone oxidoreductase subunit 2 (Trichormus variabilis (strain ATCC 29413 / PCC 7937) (Anabaena variabilis)).